The chain runs to 243 residues: uncharacterized protein (243 aa).

The segment at 157–181 is disordered; it reads SEETKEQPDATTSEKSRSPECPKTT.

This is an uncharacterized protein from Rattus norvegicus (Rat).